The sequence spans 147 residues: Helix-loop-helix protein 13 (147 aa).

The 53-residue stretch at 41–93 (EERQTASIRERKRMCSINVAFIELRNYIPTFPYEKRLSKIDTLNLAIAYINML) folds into the bHLH domain.

Expressed in hermaphrodite dopaminergic neurons (ADE, CEP, and PDE).

It localises to the nucleus. The protein localises to the cytoplasm. Its function is as follows. Transcriptional activator. Shown to have a role in the negative regulation of exit from L1 arrest and dauer diapause dependent on IIS signaling (insulin and insulin-like growth factor (IGF) signaling). Hypodermal expression is regulated by IIS/daf-16 while neuronal expression is not under the control of IIS/daf-16. The sequence is that of Helix-loop-helix protein 13 from Caenorhabditis elegans.